Here is a 455-residue protein sequence, read N- to C-terminus: tRNA modification GTPase MnmE (455 aa).

The (6S)-5-formyl-5,6,7,8-tetrahydrofolate site is built by Arg24, Glu81, and Lys121. Positions 217 to 378 constitute a TrmE-type G domain; sequence GMKVVIAGRP…LKEHLKDIMG (162 aa). A K(+)-binding site is contributed by Asn227. GTP contacts are provided by residues 227–232, 246–252, 271–274, and 336–339; these read NAGKSS, TDIAGTT, DTAG, and NKAD. Ser231 contributes to the Mg(2+) binding site. Residues Thr246, Ile248, and Thr251 each contribute to the K(+) site. Thr252 is a binding site for Mg(2+). Lys455 lines the (6S)-5-formyl-5,6,7,8-tetrahydrofolate pocket.

Belongs to the TRAFAC class TrmE-Era-EngA-EngB-Septin-like GTPase superfamily. TrmE GTPase family. As to quaternary structure, homodimer. Heterotetramer of two MnmE and two MnmG subunits. The cofactor is K(+).

It is found in the cytoplasm. Exhibits a very high intrinsic GTPase hydrolysis rate. Involved in the addition of a carboxymethylaminomethyl (cmnm) group at the wobble position (U34) of certain tRNAs, forming tRNA-cmnm(5)s(2)U34. The chain is tRNA modification GTPase MnmE from Psychromonas ingrahamii (strain DSM 17664 / CCUG 51855 / 37).